The sequence spans 410 residues: 2,3-bisphosphoglycerate-independent phosphoglycerate mutase (410 aa).

This sequence belongs to the BPG-independent phosphoglycerate mutase family. A-PGAM subfamily.

The catalysed reaction is (2R)-2-phosphoglycerate = (2R)-3-phosphoglycerate. Its pathway is carbohydrate degradation; glycolysis; pyruvate from D-glyceraldehyde 3-phosphate: step 3/5. Its function is as follows. Catalyzes the interconversion of 2-phosphoglycerate and 3-phosphoglycerate. This is 2,3-bisphosphoglycerate-independent phosphoglycerate mutase from Pyrococcus abyssi (strain GE5 / Orsay).